The sequence spans 81 residues: ATP synthase subunit c (81 aa).

Transmembrane regions (helical) follow at residues 5–25 (IAAG…IGAG) and 57–77 (VGLV…FVFA).

Belongs to the ATPase C chain family. As to quaternary structure, F-type ATPases have 2 components, F(1) - the catalytic core - and F(0) - the membrane proton channel. F(1) has five subunits: alpha(3), beta(3), gamma(1), delta(1), epsilon(1). F(0) has three main subunits: a(1), b(2) and c(10-14). The alpha and beta chains form an alternating ring which encloses part of the gamma chain. F(1) is attached to F(0) by a central stalk formed by the gamma and epsilon chains, while a peripheral stalk is formed by the delta and b chains.

The protein resides in the cell membrane. Its function is as follows. F(1)F(0) ATP synthase produces ATP from ADP in the presence of a proton or sodium gradient. F-type ATPases consist of two structural domains, F(1) containing the extramembraneous catalytic core and F(0) containing the membrane proton channel, linked together by a central stalk and a peripheral stalk. During catalysis, ATP synthesis in the catalytic domain of F(1) is coupled via a rotary mechanism of the central stalk subunits to proton translocation. Functionally, key component of the F(0) channel; it plays a direct role in translocation across the membrane. A homomeric c-ring of between 10-14 subunits forms the central stalk rotor element with the F(1) delta and epsilon subunits. This is ATP synthase subunit c from Mycobacterium marinum (strain ATCC BAA-535 / M).